The chain runs to 198 residues: Nucleoid occlusion factor SlmA (198 aa).

Residues 10–70 form the HTH tetR-type domain; sequence NRREEILQSL…SLIEFIEDSL (61 aa). A DNA-binding region (H-T-H motif) is located at residues 33-52; sequence TTAKLAASVGVSEAALYRHF. Positions 117–144 form a coiled coil; the sequence is EQDRLQGRINQLFERIEAQLRQVLREKR.

The protein belongs to the nucleoid occlusion factor SlmA family. As to quaternary structure, homodimer. Interacts with FtsZ.

It localises to the cytoplasm. It is found in the nucleoid. In terms of biological role, required for nucleoid occlusion (NO) phenomenon, which prevents Z-ring formation and cell division over the nucleoid. Acts as a DNA-associated cell division inhibitor that binds simultaneously chromosomal DNA and FtsZ, and disrupts the assembly of FtsZ polymers. SlmA-DNA-binding sequences (SBS) are dispersed on non-Ter regions of the chromosome, preventing FtsZ polymerization at these regions. The sequence is that of Nucleoid occlusion factor SlmA from Citrobacter koseri (strain ATCC BAA-895 / CDC 4225-83 / SGSC4696).